The sequence spans 254 residues: NH(3)-dependent NAD(+) synthetase (254 aa).

Glycine 32–serine 39 contributes to the ATP binding site. Residue aspartate 38 participates in Mg(2+) binding. Arginine 113 lines the deamido-NAD(+) pocket. Threonine 133 serves as a coordination point for ATP. Glutamate 138 contacts Mg(2+). The deamido-NAD(+) site is built by lysine 146 and aspartate 153. ATP is bound by residues lysine 162 and serine 184. Histidine 244 to lysine 245 is a binding site for deamido-NAD(+).

The protein belongs to the NAD synthetase family. In terms of assembly, homodimer.

It carries out the reaction deamido-NAD(+) + NH4(+) + ATP = AMP + diphosphate + NAD(+) + H(+). It functions in the pathway cofactor biosynthesis; NAD(+) biosynthesis; NAD(+) from deamido-NAD(+) (ammonia route): step 1/1. Catalyzes the ATP-dependent amidation of deamido-NAD to form NAD. Uses ammonia as a nitrogen source. In Thermococcus sibiricus (strain DSM 12597 / MM 739), this protein is NH(3)-dependent NAD(+) synthetase.